Reading from the N-terminus, the 336-residue chain is Carbamoyl dehydratase HypE (336 aa).

Position 336 is an S-carbamoylcysteine; by HypF; alternate (C336). At C336 the chain carries S-cyanocysteine; by autocatalysis; alternate.

Belongs to the HypE family. In terms of assembly, homodimer. Forms a complex with HypF. Also forms a complex with HypC, or HybG, and HypD. Post-translationally, modified by HypF, which adds a carboxamido group to the thiolate of the C-terminal cysteine, yielding a protein-S-carboxamide. The carboxamido group is then dehydrated by HypE itself to yield a protein-thiocyanate.

It catalyses the reaction C-terminal S-carboxamide-L-cysteinyl-[HypE protein] + ATP = C-terminal S-cyanate-L-cysteinyl-[HypE protein] + ADP + phosphate + H(+). Its pathway is protein modification; [NiFe] hydrogenase maturation. Functionally, involved in the maturation of [NiFe] hydrogenases. Along with HypF, it catalyzes the synthesis of the CN ligands of the active site iron of [NiFe]-hydrogenases. HypE catalyzes the ATP-dependent dehydration of the carboxamido group attached to its C-terminal cysteine to a cyano group. The cyano group is then transferred from HypE to the HypC-HypD complex or the HybG-HypD complex. This Escherichia coli (strain K12) protein is Carbamoyl dehydratase HypE.